The chain runs to 956 residues: Bifunctional glutamine synthetase adenylyltransferase/adenylyl-removing enzyme (956 aa).

An adenylyl removase region spans residues 1–450; the sequence is MENMSEQALP…YFKETVGGQE (450 aa). Residues 456–956 are adenylyl transferase; the sequence is EQWTAQLWSL…IYEQVLNNGQ (501 aa).

The protein belongs to the GlnE family. It depends on Mg(2+) as a cofactor.

It carries out the reaction [glutamine synthetase]-O(4)-(5'-adenylyl)-L-tyrosine + phosphate = [glutamine synthetase]-L-tyrosine + ADP. The enzyme catalyses [glutamine synthetase]-L-tyrosine + ATP = [glutamine synthetase]-O(4)-(5'-adenylyl)-L-tyrosine + diphosphate. Its function is as follows. Involved in the regulation of glutamine synthetase GlnA, a key enzyme in the process to assimilate ammonia. When cellular nitrogen levels are high, the C-terminal adenylyl transferase (AT) inactivates GlnA by covalent transfer of an adenylyl group from ATP to specific tyrosine residue of GlnA, thus reducing its activity. Conversely, when nitrogen levels are low, the N-terminal adenylyl removase (AR) activates GlnA by removing the adenylyl group by phosphorolysis, increasing its activity. The regulatory region of GlnE binds the signal transduction protein PII (GlnB) which indicates the nitrogen status of the cell. The sequence is that of Bifunctional glutamine synthetase adenylyltransferase/adenylyl-removing enzyme from Shewanella loihica (strain ATCC BAA-1088 / PV-4).